The chain runs to 245 residues: Probable transcriptional regulatory protein SUN_1622 (245 aa).

Belongs to the TACO1 family.

The protein localises to the cytoplasm. The polypeptide is Probable transcriptional regulatory protein SUN_1622 (Sulfurovum sp. (strain NBC37-1)).